We begin with the raw amino-acid sequence, 280 residues long: Aquaporin PIP2-7 (280 aa).

Residue Met-1 is modified to N-acetylmethionine. The Cytoplasmic segment spans residues 1–38 (MSKEVSEEGKTHHGKDYVDPPPAPLLDMGELKSWSFYR). Lys-3 carries the post-translational modification N6,N6-dimethyllysine. The chain crosses the membrane as a helical span at residues 39–59 (ALIAEFIATLLFLYVTVATVI). Over 60 to 69 (GHKKQTGPCD) the chain is Extracellular. The chain crosses the membrane as a helical span at residues 70–90 (GVGLLGIAWAFGGMIFVLVYC). Residues 91–118 (TAGISGGHINPAVTFGLFLARKVSLVRA) lie on the Cytoplasmic side of the membrane. The short motif at 100–102 (NPA) is the NPA 1 element. A helical membrane pass occupies residues 119–139 (LGYMIAQCLGAICGVGFVKAF). At 140–160 (MKTPYNTLGGGANTVADGYSK) the chain is on the extracellular side. The helical transmembrane segment at 161 to 181 (GTALGAEIIGTFVLVYTVFSA) threads the bilayer. Over 182-192 (TDPKRSARDSH) the chain is Cytoplasmic. Residues 193–213 (IPVLAPLPIGFAVFMVHLATI) form a helical membrane-spanning segment. Residues 214–242 (PITGTGINPARSFGAAVIYNNEKAWDDQW) lie on the Extracellular side of the membrane. Positions 221-223 (NPA) match the NPA 2 motif. The helical transmembrane segment at 243 to 263 (IFWVGPFLGALAAAAYHQYIL) threads the bilayer. Residues 264–280 (RASAIKALGSFRSNATN) lie on the Cytoplasmic side of the membrane. 2 positions are modified to phosphoserine: Ser-273 and Ser-276. Thr-279 bears the Phosphothreonine mark.

It belongs to the MIP/aquaporin (TC 1.A.8) family. PIP (TC 1.A.8.11) subfamily. In terms of assembly, interacts with SYP61 and SYP121 in trafficking vesicles and at the plasma membrane. As to expression, highly expressed in flowers, expressed at low levels in siliques, and at low level in leaves and roots. Highly levels in elongating cells in both roots and shoots.

The protein resides in the cell membrane. Its function is as follows. Water channel required to facilitate the transport of water across cell membrane. May be involved in the osmoregulation in plants under high osmotic stress such as under a high salt condition. The sequence is that of Aquaporin PIP2-7 from Arabidopsis thaliana (Mouse-ear cress).